A 203-amino-acid chain; its full sequence is NADH-quinone oxidoreductase subunit C (203 aa).

This sequence belongs to the complex I 30 kDa subunit family. NDH-1 is composed of 14 different subunits. Subunits NuoB, C, D, E, F, and G constitute the peripheral sector of the complex.

The protein localises to the cell inner membrane. It catalyses the reaction a quinone + NADH + 5 H(+)(in) = a quinol + NAD(+) + 4 H(+)(out). NDH-1 shuttles electrons from NADH, via FMN and iron-sulfur (Fe-S) centers, to quinones in the respiratory chain. The immediate electron acceptor for the enzyme in this species is believed to be ubiquinone. Couples the redox reaction to proton translocation (for every two electrons transferred, four hydrogen ions are translocated across the cytoplasmic membrane), and thus conserves the redox energy in a proton gradient. The protein is NADH-quinone oxidoreductase subunit C of Verminephrobacter eiseniae (strain EF01-2).